The sequence spans 354 residues: Guanine nucleotide-binding protein G(o) subunit alpha (354 aa).

Gly2 carries N-myristoyl glycine lipidation. Residue Cys3 is the site of S-palmitoyl cysteine attachment. A G-alpha domain is found at Lys32 to Tyr354. The G1 motif stretch occupies residues Lys35–Thr48. The GTP site is built by Glu43, Lys46, Ser47, Thr48, Ser152, Leu176, Arg177, Thr178, and Arg179. Residue Ser47 coordinates Mg(2+). A G2 motif region spans residues Asp174 to Thr182. Thr182 contacts Mg(2+). A G3 motif region spans residues Phe197–Arg206. A G4 motif region spans residues Ile266–Asp273. GTP is bound by residues Asn270, Asp273, and Cys325. The G5 motif stretch occupies residues Thr324–Thr329.

It belongs to the G-alpha family. G(i/o/t/z) subfamily. G proteins are composed of 3 units; alpha, beta and gamma.

It carries out the reaction GTP + H2O = GDP + phosphate + H(+). Guanine nucleotide-binding proteins (G proteins) function as transducers downstream of G protein-coupled receptors (GPCRs) in numerous signaling cascades. The alpha chain contains the guanine nucleotide binding site and alternates between an active, GTP-bound state and an inactive, GDP-bound state. Signaling by an activated GPCR promotes GDP release and GTP binding. The alpha subunit has a low GTPase activity that converts bound GTP to GDP, thereby terminating the signal. Both GDP release and GTP hydrolysis are modulated by numerous regulatory proteins. Signaling is mediated via effector proteins, such as adenylate cyclase. Inhibits adenylate cyclase activity, leading to decreased intracellular cAMP levels. The polypeptide is Guanine nucleotide-binding protein G(o) subunit alpha (gna0) (Xenopus laevis (African clawed frog)).